A 238-amino-acid polypeptide reads, in one-letter code: Phosphoribosylaminoimidazole-succinocarboxamide synthase (238 aa).

Belongs to the SAICAR synthetase family.

It carries out the reaction 5-amino-1-(5-phospho-D-ribosyl)imidazole-4-carboxylate + L-aspartate + ATP = (2S)-2-[5-amino-1-(5-phospho-beta-D-ribosyl)imidazole-4-carboxamido]succinate + ADP + phosphate + 2 H(+). It functions in the pathway purine metabolism; IMP biosynthesis via de novo pathway; 5-amino-1-(5-phospho-D-ribosyl)imidazole-4-carboxamide from 5-amino-1-(5-phospho-D-ribosyl)imidazole-4-carboxylate: step 1/2. The polypeptide is Phosphoribosylaminoimidazole-succinocarboxamide synthase (Marinomonas sp. (strain MWYL1)).